Here is a 203-residue protein sequence, read N- to C-terminus: Large ribosomal subunit protein bL25 (203 aa).

The protein belongs to the bacterial ribosomal protein bL25 family. CTC subfamily. In terms of assembly, part of the 50S ribosomal subunit; part of the 5S rRNA/L5/L18/L25 subcomplex. Contacts the 5S rRNA. Binds to the 5S rRNA independently of L5 and L18.

Its function is as follows. This is one of the proteins that binds to the 5S RNA in the ribosome where it forms part of the central protuberance. The chain is Large ribosomal subunit protein bL25 from Pseudomonas savastanoi pv. phaseolicola (strain 1448A / Race 6) (Pseudomonas syringae pv. phaseolicola (strain 1448A / Race 6)).